The primary structure comprises 131 residues: Profilin-9 (131 aa).

A disulfide bridge links Cys13 with Cys115. Residues 81 to 97 (AVTRGKKGAGGITIKKT) carry the Involved in PIP2 interaction motif. Thr111 is modified (phosphothreonine).

It belongs to the profilin family. Occurs in many kinds of cells as a complex with monomeric actin in a 1:1 ratio. In terms of processing, phosphorylated by MAP kinases.

It is found in the cytoplasm. The protein resides in the cytoskeleton. Binds to actin and affects the structure of the cytoskeleton. At high concentrations, profilin prevents the polymerization of actin, whereas it enhances it at low concentrations. The sequence is that of Profilin-9 from Phleum pratense (Common timothy).